The chain runs to 325 residues: Pyruvate dehydrogenase E1 component subunit beta (325 aa).

Residue Glu60 coordinates thiamine diphosphate.

As to quaternary structure, heterodimer of an alpha and a beta chain. Thiamine diphosphate serves as cofactor.

The catalysed reaction is N(6)-[(R)-lipoyl]-L-lysyl-[protein] + pyruvate + H(+) = N(6)-[(R)-S(8)-acetyldihydrolipoyl]-L-lysyl-[protein] + CO2. In terms of biological role, the pyruvate dehydrogenase complex catalyzes the overall conversion of pyruvate to acetyl-CoA and CO(2). It contains multiple copies of three enzymatic components: pyruvate dehydrogenase (E1), dihydrolipoamide acetyltransferase (E2) and lipoamide dehydrogenase (E3). This chain is Pyruvate dehydrogenase E1 component subunit beta (pdhB), found in Geobacillus stearothermophilus (Bacillus stearothermophilus).